We begin with the raw amino-acid sequence, 1158 residues long: ATP-dependent helicase/deoxyribonuclease subunit B (1158 aa).

Position 8-15 (8-15) interacts with ATP; the sequence is GRAGTGKS. Positions 791, 1112, 1115, and 1121 each coordinate [4Fe-4S] cluster.

It belongs to the helicase family. AddB/RexB type 1 subfamily. Heterodimer of AddA and AddB. Mg(2+) serves as cofactor. [4Fe-4S] cluster is required as a cofactor.

Functionally, the heterodimer acts as both an ATP-dependent DNA helicase and an ATP-dependent, dual-direction single-stranded exonuclease. Recognizes the chi site generating a DNA molecule suitable for the initiation of homologous recombination. The AddB subunit has 5' -&gt; 3' nuclease activity but not helicase activity. This chain is ATP-dependent helicase/deoxyribonuclease subunit B, found in Clostridium perfringens (strain SM101 / Type A).